A 293-amino-acid polypeptide reads, in one-letter code: Undecaprenyl-diphosphatase (293 aa).

7 consecutive transmembrane segments (helical) span residues 3 to 23 (IALAIKALILGIVEGLTEFLP), 43 to 63 (KGKIFEIVIQFGAILAVCWEF), 85 to 105 (INVIVATIPAITLALIFGKAI), 109 to 129 (LFNPIVVASAFILGGFVILWA), 203 to 223 (VATEFSFFLAIPVIFGATVYE), 238 to 258 (IFAVGFVAAFISAFFCVRWLL), and 269 to 289 (FAWYRIIFGIIVLATAYTHLI).

It belongs to the UppP family.

The protein resides in the cell inner membrane. The enzyme catalyses di-trans,octa-cis-undecaprenyl diphosphate + H2O = di-trans,octa-cis-undecaprenyl phosphate + phosphate + H(+). In terms of biological role, catalyzes the dephosphorylation of undecaprenyl diphosphate (UPP). Confers resistance to bacitracin. In Ralstonia pickettii (strain 12J), this protein is Undecaprenyl-diphosphatase.